The primary structure comprises 215 residues: Cytochrome b6 (215 aa).

A helical transmembrane segment spans residues 32-52 (IFYCLGGITLTCFLVQVATGF). C35 serves as a coordination point for heme c. Positions 86 and 100 each coordinate heme b. Helical transmembrane passes span 90–110 (ASMMVLMMILHVFRVYLTGGF), 116–136 (LTWVTGVVLGVLTASFGVTGY), and 186–206 (LHTFVLPLLTAVFMLMHFLMI). Heme b-binding residues include H187 and H202.

It belongs to the cytochrome b family. PetB subfamily. As to quaternary structure, the 4 large subunits of the cytochrome b6-f complex are cytochrome b6, subunit IV (17 kDa polypeptide, PetD), cytochrome f and the Rieske protein, while the 4 small subunits are PetG, PetL, PetM and PetN. The complex functions as a dimer. The cofactor is heme b. Requires heme c as cofactor.

Its subcellular location is the plastid. It localises to the chloroplast thylakoid membrane. Its function is as follows. Component of the cytochrome b6-f complex, which mediates electron transfer between photosystem II (PSII) and photosystem I (PSI), cyclic electron flow around PSI, and state transitions. This Arabidopsis thaliana (Mouse-ear cress) protein is Cytochrome b6.